We begin with the raw amino-acid sequence, 173 residues long: Large ribosomal subunit protein uL10 (173 aa).

Belongs to the universal ribosomal protein uL10 family. Part of the ribosomal stalk of the 50S ribosomal subunit. The N-terminus interacts with L11 and the large rRNA to form the base of the stalk. The C-terminus forms an elongated spine to which L12 dimers bind in a sequential fashion forming a multimeric L10(L12)X complex.

Forms part of the ribosomal stalk, playing a central role in the interaction of the ribosome with GTP-bound translation factors. The sequence is that of Large ribosomal subunit protein uL10 (rplJ) from Synechocystis sp. (strain ATCC 27184 / PCC 6803 / Kazusa).